A 256-amino-acid chain; its full sequence is Protein CUSTOS (256 aa).

The span at 1–19 shows a compositional bias: low complexity; that stretch reads MVAPSGAMSDSENSSSSSS. Disordered stretches follow at residues 1–83, 127–163, and 227–256; these read MVAP…TPEF, FTSI…QRCR, and IQKK…KPEN. Ser-62 is subject to Phosphoserine. Basic and acidic residues predominate over residues 63-83; the sequence is RRHEVNQHEEDGNDLRTTPEF. Position 80 is a phosphothreonine (Thr-80). At Ser-139 the chain carries Phosphoserine. Residues 228–235 carry the Nucleolar localization signal (NLS) motif; that stretch reads QKKRKKKA. The segment covering 228–237 has biased composition (basic residues); the sequence is QKKRKKKAKK. Low complexity predominate over residues 246–256; sequence PAECAAAKPEN.

Belongs to the CUSTOS family.

The protein resides in the nucleus envelope. In terms of biological role, plays a role in the regulation of Wnt signaling pathway during early development. The chain is Protein CUSTOS from Mus musculus (Mouse).